A 214-amino-acid polypeptide reads, in one-letter code: Probable septum site-determining protein MinC (214 aa).

The protein belongs to the MinC family. Interacts with MinD and FtsZ.

Its function is as follows. Cell division inhibitor that blocks the formation of polar Z ring septums. Rapidly oscillates between the poles of the cell to destabilize FtsZ filaments that have formed before they mature into polar Z rings. Prevents FtsZ polymerization. In Caldanaerobacter subterraneus subsp. tengcongensis (strain DSM 15242 / JCM 11007 / NBRC 100824 / MB4) (Thermoanaerobacter tengcongensis), this protein is Probable septum site-determining protein MinC.